The sequence spans 109 residues: Ferredoxin (109 aa).

2 consecutive 4Fe-4S ferredoxin-type domains span residues 2–30 (TYVVNDECVKCKYTDCVDVCPVDCFYEGE) and 31–60 (FMLVINPDECIDCGVCVPDCPIDAIKPESP). [3Fe-4S] cluster is bound by residues Cys9 and Cys17. [4Fe-4S] cluster-binding residues include Cys21, Cys40, Cys43, and Cys46. [3Fe-4S] cluster is bound at residue Cys50.

Requires [4Fe-4S] cluster as cofactor. [3Fe-4S] cluster is required as a cofactor.

Its function is as follows. Ferredoxins are iron-sulfur proteins that transfer electrons in a wide variety of metabolic reactions. The polypeptide is Ferredoxin (fdxA) (Rickettsia felis (strain ATCC VR-1525 / URRWXCal2) (Rickettsia azadi)).